An 87-amino-acid chain; its full sequence is Glutaredoxin (87 aa).

In terms of domain architecture, Glutaredoxin spans 1–87; that stretch reads MFVVIFGRPG…YAKENLGLFD (87 aa). Cysteines 11 and 14 form a disulfide.

The protein belongs to the glutaredoxin family. In terms of assembly, monomer.

The protein localises to the cytoplasm. Has a glutathione-disulfide oxidoreductase activity in the presence of NADPH and glutathione reductase. Reduces low molecular weight disulfides and proteins. This is Glutaredoxin (grx) from Vibrio cholerae serotype O1 (strain ATCC 39315 / El Tor Inaba N16961).